Consider the following 453-residue polypeptide: Glutamate-rich protein 5 (453 aa).

3 disordered regions span residues 1-38 (MGCS…ALGR), 66-377 (NGVQ…EHPA), and 394-453 (TNEE…HSML). Basic and acidic residues predominate over residues 11-21 (AGDDNRLRSAT). Serine 155 bears the Phosphoserine mark. 2 stretches are compositionally biased toward polar residues: residues 230 to 243 (LQET…SQPL) and 271 to 283 (QETL…SQLR). Composition is skewed to basic and acidic residues over residues 305-332 (EEEK…EHGG), 364-374 (IQPERTVESME), and 394-403 (TNEEDQHIEG). A compositionally biased stretch (acidic residues) spans 404–413 (ETGETVETEM). Over residues 414–424 (ESEKVSEGAET) the composition is skewed to basic and acidic residues.

This is Glutamate-rich protein 5 (ERICH5) from Bos taurus (Bovine).